The sequence spans 241 residues: Ribonuclease PH (241 aa).

Phosphate contacts are provided by residues arginine 90 and 128–130 (GTR).

It belongs to the RNase PH family. As to quaternary structure, homohexameric ring arranged as a trimer of dimers.

The catalysed reaction is tRNA(n+1) + phosphate = tRNA(n) + a ribonucleoside 5'-diphosphate. Its function is as follows. Phosphorolytic 3'-5' exoribonuclease that plays an important role in tRNA 3'-end maturation. Removes nucleotide residues following the 3'-CCA terminus of tRNAs; can also add nucleotides to the ends of RNA molecules by using nucleoside diphosphates as substrates, but this may not be physiologically important. Probably plays a role in initiation of 16S rRNA degradation (leading to ribosome degradation) during starvation. The chain is Ribonuclease PH from Corynebacterium diphtheriae (strain ATCC 700971 / NCTC 13129 / Biotype gravis).